The chain runs to 175 residues: MPETPASDLVRSLLLTVPDFPQPGILFRDLTPVLADGPALRAVVDDLVAACGPVDAVAGVEARGFLLAAAAAYASGVGTLAVRKAGKLPGEVLRETYALEYGEAAIELHPGQLAPGSRVLLLDDVLATGGTLEAAARLLERAGYEVAGIGVVLELADLGGRERLAGHDVRAILTL.

This sequence belongs to the purine/pyrimidine phosphoribosyltransferase family. As to quaternary structure, homodimer.

It is found in the cytoplasm. It catalyses the reaction AMP + diphosphate = 5-phospho-alpha-D-ribose 1-diphosphate + adenine. The protein operates within purine metabolism; AMP biosynthesis via salvage pathway; AMP from adenine: step 1/1. Catalyzes a salvage reaction resulting in the formation of AMP, that is energically less costly than de novo synthesis. The chain is Adenine phosphoribosyltransferase from Clavibacter michiganensis subsp. michiganensis (strain NCPPB 382).